The primary structure comprises 954 residues: Calsyntenin-1 (954 aa).

The first 25 residues, 1–25, serve as a signal peptide directing secretion; it reads MRIRGVKPFASAVGLLLGLLYAVDA. The Extracellular portion of the chain corresponds to 26–833; the sequence is AKVNKHKPWI…THQASVVPSA (808 aa). 2 consecutive Cadherin domains span residues 35–151 and 152–252; these read IETT…SPVF and KEKS…KPSW. N-linked (GlcNAc...) asparagine glycans are attached at residues Asn333, Asn353, and Asn552. Residues 834 to 854 form a helical membrane-spanning segment; sequence ATIVIVVCVSFLVFMIILGVF. Residues 855 to 954 are Cytoplasmic-facing; the sequence is RIRAAHQRTM…LEWDDSTLTY (100 aa). A disordered region spans residues 891–954; that stretch reads TYEDQHSSEE…LEWDDSTLTY (64 aa). Over residues 900–935 the composition is skewed to acidic residues; that stretch reads EEGDEEEEESEDGEEEDDITSAESDSSEDEAGEQED.

Belongs to the calsyntenin family. In terms of assembly, homooligomer and heterooligomer; mediates both homophilic and heterophilc interactions with clstn2 and clstn3 paralogs via cadherin domains. In terms of tissue distribution, by 48 hours post-fertilization (hpf), widely expressed in the brain, with strong expression in the telencephalon and the midbrain.

It localises to the postsynaptic cell membrane. Its subcellular location is the endoplasmic reticulum membrane. The protein localises to the golgi apparatus membrane. It is found in the cell projection. The protein resides in the neuron projection. Its function is as follows. Postsynaptic adhesion molecule involved in vesicle trafficking; required for branching of peripheral but not central axons of sensory neurons. Promotes synapse development by acting as a cell adhesion molecule at the postsynaptic membrane, which associates with presynaptic neurexins. This is Calsyntenin-1 from Danio rerio (Zebrafish).